The chain runs to 356 residues: CLIP domain-containing serine protease C9 (356 aa).

Positions 49 to 94 (SCDTPQVIGGKCMNISLCDPAFVHSIAYQEHTPVCQQNAFYRVICC) constitute a Clip domain. 4 cysteine pairs are disulfide-bonded: Cys50/Cys93, Cys60/Cys83, Cys66/Cys94, and Cys139/Cys155. An N-linked (GlcNAc...) asparagine glycan is attached at Asn62. One can recognise a Peptidase S1 domain in the interval 109 to 351 (IMHGIEAEPG…YFGWIKETVS (243 aa)). Active-site charge relay system residues include His154 and Asp194. An intrachain disulfide couples Cys258 to Cys284. An N-linked (GlcNAc...) asparagine glycan is attached at Asn292. Cysteines 300 and 328 form a disulfide. The active-site Charge relay system is the Ser304.

Belongs to the peptidase S1 family. CLIP subfamily. In the active form, heterodimer of a p12 subunit and a p30 subunit; disulfide-linked. In terms of processing, secreted as a full-length protein. Following bacterium E.coli infection, proteolytically cleaved into two chains, p12 and p30, which remain covalently linked.

It localises to the secreted. Its function is as follows. Probable serine protease which plays an essential role in the innate immune response against bacteria and protozoa infection by activating the melanization cascade. In the susceptible strain G3, appears to be dispensable for ookinete elimination which occurs by lysis. This Anopheles gambiae (African malaria mosquito) protein is CLIP domain-containing serine protease C9.